A 1041-amino-acid chain; its full sequence is Histone deacetylase complex subunit SAP130-B (1041 aa).

Disordered regions lie at residues 1 to 62 (MSSQ…QEPV), 111 to 131 (KSTMPSRPIAPAPPSALSAVP), 572 to 592 (TNQGVQTSSVSSQQASSEPKS), 614 to 769 (TPAG…PSGA), and 806 to 852 (VLAN…DEER). Residues 18 to 30 (VSNSGASVGQNVQ) are compositionally biased toward polar residues. Residues 33-42 (EVAREIDVQS) are compositionally biased toward basic and acidic residues. A compositionally biased stretch (low complexity) spans 576-592 (VQTSSVSSQQASSEPKS). Residues 614–641 (TPAGTTVMQSHSQSPGIGSSPAQGSSPR) show a composition bias toward polar residues. Over residues 707 to 728 (PGAADQPSAAASLPSSHHPTAA) the composition is skewed to low complexity.

This sequence belongs to the SAP130 family.

It is found in the nucleus. Its function is as follows. Acts as a transcriptional repressor. The sequence is that of Histone deacetylase complex subunit SAP130-B (sap130-b) from Xenopus laevis (African clawed frog).